Consider the following 265-residue polypeptide: Adenosylcobinamide-GDP ribazoletransferase (265 aa).

5 consecutive transmembrane segments (helical) span residues 59–79, 113–133, 141–161, 183–203, and 206–226; these read LSWI…SVLI, IGTF…LLLV, WIFL…ALLL, LPPF…VYFL, and FQNQ…FVFY.

The protein belongs to the CobS family. Requires Mg(2+) as cofactor.

It is found in the cell inner membrane. The enzyme catalyses alpha-ribazole + adenosylcob(III)inamide-GDP = adenosylcob(III)alamin + GMP + H(+). It carries out the reaction alpha-ribazole 5'-phosphate + adenosylcob(III)inamide-GDP = adenosylcob(III)alamin 5'-phosphate + GMP + H(+). Its pathway is cofactor biosynthesis; adenosylcobalamin biosynthesis; adenosylcobalamin from cob(II)yrinate a,c-diamide: step 7/7. Functionally, joins adenosylcobinamide-GDP and alpha-ribazole to generate adenosylcobalamin (Ado-cobalamin). Also synthesizes adenosylcobalamin 5'-phosphate from adenosylcobinamide-GDP and alpha-ribazole 5'-phosphate. The sequence is that of Adenosylcobinamide-GDP ribazoletransferase from Leptospira interrogans serogroup Icterohaemorrhagiae serovar copenhageni (strain Fiocruz L1-130).